Reading from the N-terminus, the 160-residue chain is Small ribosomal subunit protein uS9 (160 aa).

The span at 1–18 (MTDTSNSLQDLGTLTGAP) shows a compositional bias: polar residues. Positions 1–37 (MTDTSNSLQDLGTLTGAPSAQPVKSVEPKIDAQGRAY) are disordered.

The protein belongs to the universal ribosomal protein uS9 family.

This chain is Small ribosomal subunit protein uS9, found in Hyphomonas neptunium (strain ATCC 15444).